We begin with the raw amino-acid sequence, 180 residues long: NADH-quinone oxidoreductase subunit I (180 aa).

2 consecutive 4Fe-4S ferredoxin-type domains span residues 48 to 80 (IVLT…LQKS) and 90 to 119 (EFFR…LTPD). [4Fe-4S] cluster contacts are provided by C60, C63, C66, C70, C99, C102, C105, and C109. Residues 161–174 (KPKGDAENEAKPID) are compositionally biased toward basic and acidic residues. The segment at 161-180 (KPKGDAENEAKPIDVKSLLP) is disordered.

This sequence belongs to the complex I 23 kDa subunit family. NDH-1 is composed of 13 different subunits. Subunits NuoA, H, J, K, L, M, N constitute the membrane sector of the complex. The cofactor is [4Fe-4S] cluster.

The protein resides in the cell inner membrane. It carries out the reaction a quinone + NADH + 5 H(+)(in) = a quinol + NAD(+) + 4 H(+)(out). Its function is as follows. NDH-1 shuttles electrons from NADH, via FMN and iron-sulfur (Fe-S) centers, to quinones in the respiratory chain. The immediate electron acceptor for the enzyme in this species is believed to be ubiquinone. Couples the redox reaction to proton translocation (for every two electrons transferred, four hydrogen ions are translocated across the cytoplasmic membrane), and thus conserves the redox energy in a proton gradient. This Shewanella oneidensis (strain ATCC 700550 / JCM 31522 / CIP 106686 / LMG 19005 / NCIMB 14063 / MR-1) protein is NADH-quinone oxidoreductase subunit I.